We begin with the raw amino-acid sequence, 610 residues long: E-selectin (610 aa).

An N-terminal signal peptide occupies residues 1-21 (MIASQFLSALTLVLLIKESGA). A C-type lectin domain is found at 22–139 (WSYNTSTEAM…CSKKKLALCY (118 aa)). Topologically, residues 22–556 (WSYNTSTEAM…CEAPTESNIP (535 aa)) are extracellular. N-linked (GlcNAc...) asparagine glycosylation is present at N25. Intrachain disulfides connect C40–C138, C111–C130, C143–C154, C148–C163, and C165–C174. 3 residues coordinate Ca(2+): E101, N103, and E109. A carbohydrate-binding positions include 101–109 (EPNNRQKDE), 113–118 (EIYIKR), and 126–128 (NDE). Ca(2+)-binding residues include N126 and D127. In terms of domain architecture, EGF-like spans 140 to 175 (TAACTNTSCSGHGECVETINNYTCKCDPGFSGLKCE). N145 and N160 each carry an N-linked (GlcNAc...) asparagine glycan. Sushi domains follow at residues 178 to 239 (VNCT…ACNV), 240 to 301 (VECD…TCKA), 303 to 364 (TCRA…VCEA), 366 to 427 (QCTA…TCEA), 429 to 490 (RCDA…SCQV), and 491 to 549 (VKCS…TCEA). N-linked (GlcNAc...) asparagine glycans are attached at residues N179, N199, and N203. 14 cysteine pairs are disulfide-bonded: C180/C224, C193/C206, C210/C237, C242/C286, C255/C268, C272/C299, C304/C349, C335/C362, C367/C412, C398/C425, C430/C475, C461/C488, C493/C534, and C520/C547. An N-linked (GlcNAc...) asparagine glycan is attached at N265. Residues N312 and N332 are each glycosylated (N-linked (GlcNAc...) asparagine). N-linked (GlcNAc...) asparagine glycans are attached at residues N503 and N527. Residues 557 to 578 (LVAGLSAAGLSLLTLAPFLLWL) form a helical membrane-spanning segment. At 579 to 610 (RKCLRKAKKFVPASSCQSLESDGSYQKPSYIL) the chain is on the cytoplasmic side.

The protein belongs to the selectin/LECAM family. Interacts with SELPLG/PSGL1 and PODXL2 through the sialyl Lewis X epitope. SELPLG sulfation appears not to be required for this interaction.

The protein resides in the cell membrane. Cell-surface glycoprotein having a role in immunoadhesion. Mediates in the adhesion of blood neutrophils in cytokine-activated endothelium through interaction with SELPLG/PSGL1. May have a role in capillary morphogenesis. The sequence is that of E-selectin (SELE) from Homo sapiens (Human).